The chain runs to 206 residues: dTTP/UTP pyrophosphatase (206 aa).

The active-site Proton acceptor is the Asp-79.

It belongs to the Maf family. YhdE subfamily. Requires a divalent metal cation as cofactor.

It localises to the cytoplasm. The enzyme catalyses dTTP + H2O = dTMP + diphosphate + H(+). It catalyses the reaction UTP + H2O = UMP + diphosphate + H(+). Nucleoside triphosphate pyrophosphatase that hydrolyzes dTTP and UTP. May have a dual role in cell division arrest and in preventing the incorporation of modified nucleotides into cellular nucleic acids. The sequence is that of dTTP/UTP pyrophosphatase from Rhizobium meliloti (strain 1021) (Ensifer meliloti).